A 272-amino-acid polypeptide reads, in one-letter code: Endoplasmic reticulum resident protein 27 (272 aa).

The signal sequence occupies residues 1–25; the sequence is MEAMPSRCLFLLFLSTCKLSPEVVA. Residues 38-151 enclose the Thioredoxin domain; sequence EPMRLTDVQA…LVTEYNAITA (114 aa). Asparagine 99 carries N-linked (GlcNAc...) asparagine glycosylation. Positions 229 to 232 are PDIA3-binding site; that stretch reads DKWD. The Prevents secretion from ER signature appears at 269-272; the sequence is KVEL.

It belongs to the protein disulfide isomerase family. In terms of assembly, interacts with PDIA3.

Its subcellular location is the endoplasmic reticulum lumen. Its function is as follows. Specifically binds unfolded proteins and may recruit protein disulfide isomerase PDIA3 to unfolded substrates. Binds protein substrates via a hydrophobic pocket in the C-terminal domain. May play a role in the unfolded stress response. In Bos taurus (Bovine), this protein is Endoplasmic reticulum resident protein 27 (ERP27).